Consider the following 83-residue polypeptide: Cardiotoxin 7'' (83 aa).

An N-terminal signal peptide occupies residues 1 to 21 (MKTLLLTLVVVTIVCLDLGYT). 4 cysteine pairs are disulfide-bonded: cysteine 24–cysteine 43, cysteine 36–cysteine 61, cysteine 65–cysteine 76, and cysteine 77–cysteine 82.

The protein belongs to the three-finger toxin family. Short-chain subfamily. Orphan group XV sub-subfamily. In terms of tissue distribution, expressed by the venom gland.

The protein resides in the secreted. Its subcellular location is the target cell membrane. Functionally, has low cytotoxic activity. In Naja atra (Chinese cobra), this protein is Cardiotoxin 7''.